The chain runs to 461 residues: GTPase Der (461 aa).

EngA-type G domains are found at residues 9 to 171 (KTIA…NLNK) and 200 to 371 (IQVG…ECFS). GTP contacts are provided by residues 15-22 (GQPNVGKS), 62-66 (DTGGM), 123-126 (NKID), 206-213 (GRVNVGKS), 253-257 (DTAGI), and 317-320 (NKWD). A KH-like domain is found at 372-456 (KRIPTSLLNS…PLILNAKDKK (85 aa)).

It belongs to the TRAFAC class TrmE-Era-EngA-EngB-Septin-like GTPase superfamily. EngA (Der) GTPase family. Associates with the 50S ribosomal subunit.

GTPase that plays an essential role in the late steps of ribosome biogenesis. The sequence is that of GTPase Der from Helicobacter pylori (strain HPAG1).